The chain runs to 588 residues: MKLKYLVSAMALVVLSSGTAMAKTPDMGSFHADMGSCQSCHAKPIKVTDSETHENAQCKSCHGEYAELANDKLQFDPHNSHLGDINCTSCHKGHEEPKFYCNECHSFDIKPMPFSDAKKKKSWDDGWDQDKIQKAIAAGPSETTQVLVVGAGSAGFNASLAAKKAGANVILVDKAPFSGGNSMISAGGMNAVGTKQQTAHGVEDKVEWFIEDAMKGGRQQNDIKLVTILAEQSADGVQWLESLGANLDDLKRSGGARVDRTHRPHGGKSSGPEIIDTLRKAAKEQGIDTRLNSRVVKLVVNDDHSVVGAVVHGKHTGYYMIGAKSVVLATGGYGMNKEMIAYYRPTMKDMTSSNNITATGDGVLMAKEIGASMTDIDWVQAHPTVGKDSRILISETVRGVGAVMVNKDGNRFISELTTRDKASDAILKQPGQFAWIIFDNQLYKKAKMVRGYDHLEMLYKGDTVEQLAKSTGMKVADLAKTVSDYNGYVASGKDTAFGRADMPLNMTQSPYYAVKVAPGIHHTMGGVAINTTASVLDLQSKPIDGLFAAGEVTGGVHGYNRLGGNAIADTVVFGRIAGDNAAKHALDK.

Residues Met-1–Ala-22 form the signal peptide. Heme c is bound by residues His-31, Cys-37, Cys-40, His-41, Cys-58, Cys-61, His-62, His-78, His-81, Cys-87, Cys-90, His-91, Gly-93, His-94, Cys-101, Cys-104, and His-105. A flavoprotein-like region spans residues Ala-135–Lys-588. The FAD site is built by Ala-154, Asp-173, Asn-181, Ser-182, Gly-187, and Gly-188. Gly-187 contributes to the fumarate binding site. Gly-187 contacts succinate. Arg-218 contacts heme c. FAD is bound by residues Val-295 and Asp-361. The succinate site is built by His-382, Ser-394, and Glu-395. Positions 394 and 395 each coordinate fumarate. Arg-419 (proton donor) is an active-site residue. Residue His-521 participates in fumarate binding. His-521 is a succinate binding site. Glu-551 is an FAD binding site. 2 residues coordinate fumarate: Arg-561 and Gly-564. Residues Arg-561 and Gly-564 each coordinate succinate. The FAD site is built by Gly-564, Ala-566, and Ile-567.

In terms of assembly, homodimer. The cofactor is FAD. Heme c serves as cofactor.

It localises to the periplasm. Flavocytochrome that catalyzes the reduction of fumarate to succinate in vitro. Is essentially unidirectional, catalyzing only fumarate reduction. In vitro, can use the artificial electron donor methyl viologen. May be involved in an alternative route for electron transport to Fe(3+). This is Probable fumarate reductase Ifc3 from Shewanella frigidimarina (strain NCIMB 400).